The following is a 305-amino-acid chain: Ferredoxin--NADP reductase (305 aa).

FAD-binding residues include Glu-31, Tyr-42, Val-82, and Asp-274.

It belongs to the ferredoxin--NADP reductase type 2 family. Homodimer. FAD serves as cofactor.

It catalyses the reaction 2 reduced [2Fe-2S]-[ferredoxin] + NADP(+) + H(+) = 2 oxidized [2Fe-2S]-[ferredoxin] + NADPH. This is Ferredoxin--NADP reductase from Ignicoccus hospitalis (strain KIN4/I / DSM 18386 / JCM 14125).